We begin with the raw amino-acid sequence, 343 residues long: C5a anaphylatoxin chemotactic receptor 2 (343 aa).

Residues 1 to 44 (MLNDTTSKDYEYEYDQEQYSDLLNVPVDCPAGNCFSNDAYLIVL) lie on the Extracellular side of the membrane. Asparagine 3 is a glycosylation site (N-linked (GlcNAc...) asparagine). The chain crosses the membrane as a helical span at residues 45–67 (LGLYSVIFLVGVPGNTLLAWVTW). Over 68 to 78 (KESRHRLGASW) the chain is Cytoplasmic. The helical transmembrane segment at 79–101 (FLHLTMADLLCCVSLPFLAVPIA) threads the bilayer. At 102–120 (QKGHWPYGTAGCWLLSSIT) the chain is on the extracellular side. Cysteines 113 and 192 form a disulfide. The chain crosses the membrane as a helical span at residues 121–143 (VLSMYASVLLLTGLSGDLFLLAF). Residues 144 to 155 (RPSWKNADQRTC) are Cytoplasmic-facing. A helical membrane pass occupies residues 156–178 (GVRVVQVSSWMLALLLTVPGAVY). At 179-208 (RKLLQEHYPPRLVCGTNYGGSVTAEVTITT) the chain is on the extracellular side. A helical transmembrane segment spans residues 209–231 (VRFLFGFLVPLVFMASCHGILQR). Residues 232 to 243 (QMARRHWPLGTA) lie on the Cytoplasmic side of the membrane. The chain crosses the membrane as a helical span at residues 244 to 266 (VVVGFFICWTPFHLLRVIIAVAS). The Extracellular portion of the chain corresponds to 267–280 (SHSPLLAWALEAEP). A helical transmembrane segment spans residues 281 to 300 (LVTGLALAHSALNPIMFLYF). The Cytoplasmic segment spans residues 301–343 (GRKQLCKSLQAACHWALRDLQDEEESAVTKVSTSQEMVSEMPV). Serine 326 carries the post-translational modification Phosphoserine.

The protein belongs to the G-protein coupled receptor 1 family. Interacts with C3 (the anaphylatoxin peptide C3a and the adipogenic hormone ASP); the interaction occurs with higher affinity for ASP, enhancing the phosphorylation and activation of GPR77, recruitment of ARRB2 to the cell surface and endocytosis of GRP77.

The protein resides in the cell membrane. Its function is as follows. Receptor for the chemotactic and inflammatory C3a, C4a and C5a anaphylatoxin peptides and also for their dearginated forms ASP/C3adesArg, C4adesArg and C5adesArg respectively. Couples weakly to G(i)-mediated signaling pathways. This is C5a anaphylatoxin chemotactic receptor 2 (C5ar2) from Rattus norvegicus (Rat).